Consider the following 454-residue polypeptide: Probable 1,4-beta-D-glucan cellobiohydrolase C (454 aa).

Positions Met-1 to Ala-19 are cleaved as a signal peptide. Residues Gln-20–Ile-55 enclose the CBM1 domain. 2 disulfide bridges follow: Cys-27-Cys-44 and Cys-38-Cys-54. 2 thr-rich linker regions span residues Thr-59–Thr-94 and Ala-95–Phe-454. A disordered region spans residues Thr-68–Ala-95. Asp-184 is a catalytic residue. 2 cysteine pairs are disulfide-bonded: Cys-185–Cys-244 and Cys-376–Cys-423. Asp-230 (proton donor) is an active-site residue. Asp-409 acts as the Nucleophile in catalysis. N-linked (GlcNAc...) asparagine glycosylation is present at Asn-413.

It belongs to the glycosyl hydrolase 6 (cellulase B) family.

It localises to the secreted. It catalyses the reaction Hydrolysis of (1-&gt;4)-beta-D-glucosidic linkages in cellulose and cellotetraose, releasing cellobiose from the non-reducing ends of the chains.. Its function is as follows. The biological conversion of cellulose to glucose generally requires three types of hydrolytic enzymes: (1) Endoglucanases which cut internal beta-1,4-glucosidic bonds; (2) Exocellobiohydrolases that cut the disaccharide cellobiose from the non-reducing end of the cellulose polymer chain; (3) Beta-1,4-glucosidases which hydrolyze the cellobiose and other short cello-oligosaccharides to glucose. This Aspergillus fumigatus (strain CBS 144.89 / FGSC A1163 / CEA10) (Neosartorya fumigata) protein is Probable 1,4-beta-D-glucan cellobiohydrolase C (cbhC).